Here is a 100-residue protein sequence, read N- to C-terminus: Aspartyl/glutamyl-tRNA(Asn/Gln) amidotransferase subunit C (100 aa).

The protein belongs to the GatC family. As to quaternary structure, heterotrimer of A, B and C subunits.

The catalysed reaction is L-glutamyl-tRNA(Gln) + L-glutamine + ATP + H2O = L-glutaminyl-tRNA(Gln) + L-glutamate + ADP + phosphate + H(+). It carries out the reaction L-aspartyl-tRNA(Asn) + L-glutamine + ATP + H2O = L-asparaginyl-tRNA(Asn) + L-glutamate + ADP + phosphate + 2 H(+). Its function is as follows. Allows the formation of correctly charged Asn-tRNA(Asn) or Gln-tRNA(Gln) through the transamidation of misacylated Asp-tRNA(Asn) or Glu-tRNA(Gln) in organisms which lack either or both of asparaginyl-tRNA or glutaminyl-tRNA synthetases. The reaction takes place in the presence of glutamine and ATP through an activated phospho-Asp-tRNA(Asn) or phospho-Glu-tRNA(Gln). This is Aspartyl/glutamyl-tRNA(Asn/Gln) amidotransferase subunit C from Rickettsia bellii (strain OSU 85-389).